The primary structure comprises 360 residues: Protein phosphatase 1 regulatory subunit 7 (360 aa).

The tract at residues 1–64 is disordered; that stretch reads MAAERGAGQQ…GEEDPEEEHE (64 aa). At Ala2 the chain carries N-acetylalanine. A phosphoserine mark is found at Ser12, Ser24, Ser27, Ser44, and Ser47. Residues 17-34 are compositionally biased toward basic and acidic residues; sequence EVDRRVESEESGDEEGKK. The segment covering 53 to 63 has biased composition (acidic residues); sequence ERGEEDPEEEH. 11 LRR repeats span residues 77–98, 99–120, 121–142, 143–164, 165–186, 187–208, 209–230, 231–252, 253–274, 275–296, and 297–318; these read DAED…EVLK, KVKT…EELQ, SLRE…EALT, ELEI…DKVT, QLKK…SNLH, QLQM…DTLT, NLES…DALT, NLTV…QNLV, NLQE…ENNN, KLTM…SHLT, and EPQE…DELK. A Phosphoserine modification is found at Ser322. In terms of domain architecture, LRRCT spans 331–360; sequence NPLQKDPQYRRKVMLALPSVRQIDATFVRF.

The protein belongs to the SDS22 family. Interacts with PPP1CA, PPP1CB and PPP1CC/PPP1G.

The protein localises to the nucleus. In terms of biological role, regulatory subunit of protein phosphatase 1. This is Protein phosphatase 1 regulatory subunit 7 (PPP1R7) from Pongo abelii (Sumatran orangutan).